We begin with the raw amino-acid sequence, 1432 residues long: DNA-directed RNA polymerase subunit beta (1432 aa).

Belongs to the RNA polymerase beta chain family. As to quaternary structure, the RNAP catalytic core consists of 2 alpha, 1 beta, 1 beta' and 1 omega subunit. When a sigma factor is associated with the core the holoenzyme is formed, which can initiate transcription.

The enzyme catalyses RNA(n) + a ribonucleoside 5'-triphosphate = RNA(n+1) + diphosphate. In terms of biological role, DNA-dependent RNA polymerase catalyzes the transcription of DNA into RNA using the four ribonucleoside triphosphates as substrates. This is DNA-directed RNA polymerase subunit beta from Solibacter usitatus (strain Ellin6076).